We begin with the raw amino-acid sequence, 104 residues long: uncharacterized protein (104 aa).

This is an uncharacterized protein from Archaeoglobus fulgidus (strain ATCC 49558 / DSM 4304 / JCM 9628 / NBRC 100126 / VC-16).